Consider the following 339-residue polypeptide: Large ribosomal subunit protein uL11m (339 aa).

This sequence belongs to the universal ribosomal protein uL11 family.

Its subcellular location is the mitochondrion. This chain is Large ribosomal subunit protein uL11m (RPL11), found in Acanthamoeba castellanii (Amoeba).